The chain runs to 669 residues: DNA ligase (669 aa).

Residues 34-38, 83-84, and Glu-114 contribute to the NAD(+) site; these read DAEYD and SL. Lys-116 (N6-AMP-lysine intermediate) is an active-site residue. NAD(+) contacts are provided by Arg-137, Glu-171, Lys-287, and Lys-311. Positions 405, 408, 423, and 428 each coordinate Zn(2+). Positions 591 to 669 constitute a BRCT domain; the sequence is NVESYFAGKT…EERFLQELNK (79 aa).

Belongs to the NAD-dependent DNA ligase family. LigA subfamily. Requires Mg(2+) as cofactor. Mn(2+) is required as a cofactor.

It catalyses the reaction NAD(+) + (deoxyribonucleotide)n-3'-hydroxyl + 5'-phospho-(deoxyribonucleotide)m = (deoxyribonucleotide)n+m + AMP + beta-nicotinamide D-nucleotide.. Functionally, DNA ligase that catalyzes the formation of phosphodiester linkages between 5'-phosphoryl and 3'-hydroxyl groups in double-stranded DNA using NAD as a coenzyme and as the energy source for the reaction. It is essential for DNA replication and repair of damaged DNA. The protein is DNA ligase of Bacillus cereus (strain ATCC 14579 / DSM 31 / CCUG 7414 / JCM 2152 / NBRC 15305 / NCIMB 9373 / NCTC 2599 / NRRL B-3711).